Consider the following 586-residue polypeptide: Protein CBFA2T2 (586 aa).

The segment at 1-95 (MVGIPGPYQF…SSSSSLANQQ (95 aa)) is disordered. The segment covering 56–68 (SSHSNGINHSPPT) has biased composition (polar residues). Over residues 77–90 (QRSSNGPSSSSSSS) the composition is skewed to low complexity. The TAFH domain occupies 102–197 (VRQLSKLKRF…TPSQYLAQHE (96 aa)). Disordered stretches follow at residues 204 to 242 (STSS…AEPP) and 387 to 417 (IRKG…FGSR). Positions 228-237 (DRREEERETA) are enriched in basic and acidic residues. Low complexity predominate over residues 399–409 (SPSSTDSGASD). The stretch at 429–481 (RKAEEAVNEVKRQAMSEVQKAVSEAEQKAFEMIASERARMEQTIVDAKRRAAE) forms a coiled coil. The Zn(2+) site is built by Cys497, Cys500, Cys508, Cys511, Cys517, Cys521, His529, and Cys533. The segment at 497-533 (CWNCGRKASETCSGCNIARYCGSFCQHKDWEKHHRIC) adopts an MYND-type zinc-finger fold. Positions 561-586 (SPTLERSSSATSRSSTPASVTAVDGL) are disordered. Residues 566–586 (RSSSATSRSSTPASVTAVDGL) are compositionally biased toward low complexity.

The protein localises to the nucleus. Functionally, may act as a transcriptional corepressor. The polypeptide is Protein CBFA2T2 (cbfa2t2) (Xenopus laevis (African clawed frog)).